A 101-amino-acid chain; its full sequence is Large ribosomal subunit protein bL21 (101 aa).

This sequence belongs to the bacterial ribosomal protein bL21 family. As to quaternary structure, part of the 50S ribosomal subunit. Contacts protein L20.

Its function is as follows. This protein binds to 23S rRNA in the presence of protein L20. This Metamycoplasma arthritidis (strain 158L3-1) (Mycoplasma arthritidis) protein is Large ribosomal subunit protein bL21.